We begin with the raw amino-acid sequence, 139 residues long: uncharacterized protein (139 aa).

This is an uncharacterized protein from Saccharomyces cerevisiae (strain ATCC 204508 / S288c) (Baker's yeast).